A 1326-amino-acid polypeptide reads, in one-letter code: Coiled-coil domain-containing protein 171 (1326 aa).

Coiled-coil stretches lie at residues 53 to 294, 323 to 391, 450 to 561, 597 to 630, 660 to 707, 765 to 792, 979 to 1143, and 1217 to 1241; these read TTKH…RAAH, AEAV…RLQY, SFSV…AFHK, SELC…ICKN, WHRQ…EQLV, FKLE…MKKK, FTQR…KECV, and IMTL…LHTA. A disordered region spans residues 1306–1326; it reads SSHSSPVTMSANANRPTQIGL.

This is Coiled-coil domain-containing protein 171 (CCDC171) from Homo sapiens (Human).